Reading from the N-terminus, the 105-residue chain is L-rhamnose mutarotase (105 aa).

Tyr19 serves as a coordination point for substrate. The Proton donor role is filled by His23. Residues Tyr42 and 77-78 (WW) contribute to the substrate site.

Belongs to the rhamnose mutarotase family. Homodimer.

It is found in the cytoplasm. The catalysed reaction is alpha-L-rhamnose = beta-L-rhamnose. Its pathway is carbohydrate metabolism; L-rhamnose metabolism. Functionally, involved in the anomeric conversion of L-rhamnose. The sequence is that of L-rhamnose mutarotase from Mesorhizobium japonicum (strain LMG 29417 / CECT 9101 / MAFF 303099) (Mesorhizobium loti (strain MAFF 303099)).